We begin with the raw amino-acid sequence, 337 residues long: MTEINEKSLLKQALAEIKKKFGNESIMVLGEKPPIDTEVFSSGSMAIDMALGIGGFPKGRIIEIYGPESSGKTTISLHAIAEVQKQGGIAAFIDAEHSIDPQYAKNLGIDIDNLILSQPDSGEQALDIVDTLTKTKAIDLIVVDSVAALVPMAELQGEMKDQVIGAQARLMSKALRKITASLNKNGTTVIFINQIREKVGVIFGNPETTPGGRGLKFYASIRLDVRKIQQITSGNDITGHSVKIKVVKNKLAIPFKTALVEIVFAKGISKSAEIAQLGEELGILVRKGSWFAYKGENIAQGKVNLKLLLENNTKLFNEIKDQIIEKLKENQQQSQTL.

66–73 (GPESSGKT) provides a ligand contact to ATP.

Belongs to the RecA family.

The protein localises to the cytoplasm. Can catalyze the hydrolysis of ATP in the presence of single-stranded DNA, the ATP-dependent uptake of single-stranded DNA by duplex DNA, and the ATP-dependent hybridization of homologous single-stranded DNAs. It interacts with LexA causing its activation and leading to its autocatalytic cleavage. This Mesomycoplasma hyopneumoniae (strain 232) (Mycoplasma hyopneumoniae) protein is Protein RecA.